Here is a 278-residue protein sequence, read N- to C-terminus: Octanoyl-[GcvH]:protein N-octanoyltransferase (278 aa).

The BPL/LPL catalytic domain occupies 44–249; that stretch reads SQSPPTLRAW…TLQQHGASLL (206 aa). The Acyl-thioester intermediate role is filled by cysteine 148.

Belongs to the octanoyltransferase LipL family.

It catalyses the reaction N(6)-octanoyl-L-lysyl-[glycine-cleavage complex H protein] + L-lysyl-[lipoyl-carrier protein] = N(6)-octanoyl-L-lysyl-[lipoyl-carrier protein] + L-lysyl-[glycine-cleavage complex H protein]. It participates in protein modification; protein lipoylation via endogenous pathway; protein N(6)-(lipoyl)lysine from octanoyl-[acyl-carrier-protein]. In terms of biological role, catalyzes the amidotransfer (transamidation) of the octanoyl moiety from octanoyl-GcvH to the lipoyl domain of the E2 subunit of lipoate-dependent enzymes. This is Octanoyl-[GcvH]:protein N-octanoyltransferase from Halalkalibacterium halodurans (strain ATCC BAA-125 / DSM 18197 / FERM 7344 / JCM 9153 / C-125) (Bacillus halodurans).